Here is a 172-residue protein sequence, read N- to C-terminus: Glutamyl-tRNA(Gln) amidotransferase subunit C-4, mitochondrial (172 aa).

A mitochondrion-targeting transit peptide spans Met-1 to Phe-23. Residues Pro-51–Pro-73 are disordered.

The protein belongs to the GatC family. Subunit of the heterotrimeric GatCAB amidotransferase (AdT) complex, composed of A, B and C subunits.

The protein localises to the mitochondrion. It catalyses the reaction L-glutamyl-tRNA(Gln) + L-glutamine + ATP + H2O = L-glutaminyl-tRNA(Gln) + L-glutamate + ADP + phosphate + H(+). Its function is as follows. Allows the formation of correctly charged Gln-tRNA(Gln) through the transamidation of misacylated Glu-tRNA(Gln) in the mitochondria. The reaction takes place in the presence of glutamine and ATP through an activated gamma-phospho-Glu-tRNA(Gln). The protein is Glutamyl-tRNA(Gln) amidotransferase subunit C-4, mitochondrial of Culex quinquefasciatus (Southern house mosquito).